A 794-amino-acid chain; its full sequence is Phosphoribosylformylglycinamidine synthase subunit PurL (794 aa).

H47 is an active-site residue. Residues Y50 and K89 each contribute to the ATP site. E91 is a Mg(2+) binding site. Substrate contacts are provided by residues 92–95 (SHNH) and R114. H93 functions as the Proton acceptor in the catalytic mechanism. D115 contributes to the Mg(2+) binding site. Position 238 (Q238) interacts with substrate. D266 contacts Mg(2+). 310–312 (ESQ) is a binding site for substrate. ATP-binding residues include D522 and G559. N560 contacts Mg(2+). S562 provides a ligand contact to substrate.

This sequence belongs to the FGAMS family. In terms of assembly, monomer. Part of the FGAM synthase complex composed of 1 PurL, 1 PurQ and 2 PurS subunits.

The protein localises to the cytoplasm. The enzyme catalyses N(2)-formyl-N(1)-(5-phospho-beta-D-ribosyl)glycinamide + L-glutamine + ATP + H2O = 2-formamido-N(1)-(5-O-phospho-beta-D-ribosyl)acetamidine + L-glutamate + ADP + phosphate + H(+). It participates in purine metabolism; IMP biosynthesis via de novo pathway; 5-amino-1-(5-phospho-D-ribosyl)imidazole from N(2)-formyl-N(1)-(5-phospho-D-ribosyl)glycinamide: step 1/2. Functionally, part of the phosphoribosylformylglycinamidine synthase complex involved in the purines biosynthetic pathway. Catalyzes the ATP-dependent conversion of formylglycinamide ribonucleotide (FGAR) and glutamine to yield formylglycinamidine ribonucleotide (FGAM) and glutamate. The FGAM synthase complex is composed of three subunits. PurQ produces an ammonia molecule by converting glutamine to glutamate. PurL transfers the ammonia molecule to FGAR to form FGAM in an ATP-dependent manner. PurS interacts with PurQ and PurL and is thought to assist in the transfer of the ammonia molecule from PurQ to PurL. The polypeptide is Phosphoribosylformylglycinamidine synthase subunit PurL (Prochlorococcus marinus (strain MIT 9313)).